We begin with the raw amino-acid sequence, 61 residues long: Small ribosomal subunit protein uS14B (61 aa).

Zn(2+) contacts are provided by Cys-24, Cys-27, Cys-40, and Cys-43.

The protein belongs to the universal ribosomal protein uS14 family. Zinc-binding uS14 subfamily. As to quaternary structure, part of the 30S ribosomal subunit. Contacts proteins S3 and S10. Requires Zn(2+) as cofactor.

Its function is as follows. Binds 16S rRNA, required for the assembly of 30S particles and may also be responsible for determining the conformation of the 16S rRNA at the A site. The protein is Small ribosomal subunit protein uS14B of Streptococcus pyogenes serotype M6 (strain ATCC BAA-946 / MGAS10394).